A 3739-amino-acid polypeptide reads, in one-letter code: Pikromycin polyketide synthase component PikAII (3739 aa).

Residues 35–463 (GEPVAIVGMA…GTNAHVVLEE (429 aa)) enclose the Ketosynthase family 3 (KS3) 1 domain. 2 module regions span residues 38 to 1517 (VAIV…EFLL) and 1542 to 3642 (VAIV…GHLL). Residue C208 is the Acyl-thioester intermediate; for beta-ketoacyl synthase 1 activity of the active site. Active-site for beta-ketoacyl synthase 1 activity residues include H343 and H383. Residues 572–877 (FVFPGQGTQW…ERLVTSLAEA (306 aa)) are acyltransferase 1. S662 functions as the Acyl-ester intermediate; for acyltransferase 1 activity in the catalytic mechanism. The interval 1150 to 1343 (GTVLVTGAEE…VTSVAWSPWE (194 aa)) is C2-type beta-ketoacyl reductase 1. Residue Y1313 is the For C2-type beta-ketoacyl reductase 1 and probable racemase activities of the active site. Positions 1445 to 1520 (RRMQELVREH…TLAEFLLAEI (76 aa)) constitute a Carrier 1 domain. S1480 bears the O-(pantetheine 4'-phosphoryl)serine mark. Residues 1539–1967 (DEPVAIVGMA…GTNAHIVLEE (429 aa)) form the Ketosynthase family 3 (KS3) 2 domain. Catalysis depends on C1712, which acts as the Acyl-thioester intermediate; for beta-ketoacyl synthase 2 activity. Residues H1847 and H1887 each act as for beta-ketoacyl synthase 2 activity in the active site. The acyltransferase 2 stretch occupies residues 2069–2374 (FVFPGQGTQW…HRLTTSLAEA (306 aa)). Catalysis depends on S2159, which acts as the Acyl-ester intermediate; for acyltransferase 2 activity. Residues 2428-2553 (HPLLGAAVAL…GVLAARADRT (126 aa)) form an N-terminal hotdog fold region. The tract at residues 2428 to 2703 (HPLLGAAVAL…LTVLPVDPAQ (276 aa)) is dehydratase. Residues 2428–2705 (HPLLGAAVAL…VLPVDPAQLA (278 aa)) enclose the PKS/mFAS DH domain. H2460 acts as the Proton acceptor; for dehydratase activity in catalysis. The tract at residues 2567-2705 (AEPVDVDGLY…VLPVDPAQLA (139 aa)) is C-terminal hotdog fold. D2629 serves as the catalytic Proton donor; for dehydratase activity. Positions 2959–3267 (GSLESLTAAP…QARHTGKVVL (309 aa)) are enoyl reductase. Y3005 functions as the For enoyl reductase activity in the catalytic mechanism. Residues 3092–3109 (LLVHSAAGGVGMAAVQLA), 3285–3288 (TGAL), 3309–3312 (SRRG), 3338–3339 (DV), K3388, and 3412–3413 (FS) each bind NADP(+). The beta-ketoacyl reductase 2 stretch occupies residues 3277–3458 (GTVLLTGGTG…LSLGWGLWAE (182 aa)). Y3427 acts as the For beta-ketoacyl reductase 2 activity in catalysis. The 76-residue stretch at 3570–3645 (AHLRDLVRTH…ELAGHLLDEL (76 aa)) folds into the Carrier 2 domain. An O-(pantetheine 4'-phosphoryl)serine modification is found at S3605.

As to quaternary structure, homodimer. Pikromycin PKS consists of a combination of multimodular (PikAI and PikAII) and monomodular (PikAIII and PikAIV) polypeptides each coding for a functional synthase subunit which participates in 1 (monomodular) or 2 (multimodular) of the six FAS-like elongation steps required for formation of the polyketide. Module 1, 2, 3, 4, 5, and 6 participating in biosynthesis steps 1, 2, 3, 4, 5, and 6, respectively. Requires pantetheine 4'-phosphate as cofactor.

It carries out the reaction 5 (S)-methylmalonyl-CoA + malonyl-CoA + 5 NADPH + 11 H(+) = 10-deoxymethynolide + 6 CO2 + 5 NADP(+) + 6 CoA + 2 H2O. The enzyme catalyses 6 (S)-methylmalonyl-CoA + malonyl-CoA + 5 NADPH + 12 H(+) = narbonolide + 7 CO2 + 5 NADP(+) + 7 CoA + 2 H2O. The protein operates within antibiotic biosynthesis. Involved in the biosynthesis of 12- and 14-membered ring macrolactone antibiotics such as methymycin/neomethymycin and pikromycin/narbomycin, respectively. Component of the pikromycin PKS which catalyzes the biosynthesis of both precursors 10-deoxymethynolide (12-membered ring macrolactone) and narbonolide (14-membered ring macrolactone). Chain elongation through PikAI, PikAII and PikAIII followed by thioesterase catalyzed termination results in the production of 10-deoxymethynolide, while continued elongation through PikAIV, followed by thioesterase (TE) catalyzed cyclization results in the biosynthesis of the narbonolide. This Streptomyces venezuelae protein is Pikromycin polyketide synthase component PikAII.